Consider the following 353-residue polypeptide: Photosystem II protein D1 (353 aa).

An N-acetylthreonine modification is found at T2. Residue T2 is modified to Phosphothreonine. A run of 3 helical transmembrane segments spans residues 29-46 (YIGWFGVLMIPTLLTATS), 118-133 (HFLLGVACYMGREWEL), and 142-156 (WIAVAYSAPVAAATA). H118 provides a ligand contact to chlorophyll a. Pheophytin a is bound at residue Y126. 2 residues coordinate [CaMn4O5] cluster: D170 and E189. The chain crosses the membrane as a helical span at residues 197–218 (FHMLGVAGVFGGSLFSAMHGSL). H198 provides a ligand contact to chlorophyll a. Residues H215 and 264-265 (SF) contribute to the a quinone site. H215 provides a ligand contact to Fe cation. H272 contacts Fe cation. Residues 274-288 (FLAAWPVVGIWFTAL) traverse the membrane as a helical segment. Positions 332, 333, 342, and 344 each coordinate [CaMn4O5] cluster. Positions 345 to 353 (AVEVPAING) are excised as a propeptide.

Belongs to the reaction center PufL/M/PsbA/D family. PSII is composed of 1 copy each of membrane proteins PsbA, PsbB, PsbC, PsbD, PsbE, PsbF, PsbH, PsbI, PsbJ, PsbK, PsbL, PsbM, PsbT, PsbX, PsbY, PsbZ, Psb30/Ycf12, at least 3 peripheral proteins of the oxygen-evolving complex and a large number of cofactors. It forms dimeric complexes. The D1/D2 heterodimer binds P680, chlorophylls that are the primary electron donor of PSII, and subsequent electron acceptors. It shares a non-heme iron and each subunit binds pheophytin, quinone, additional chlorophylls, carotenoids and lipids. D1 provides most of the ligands for the Mn4-Ca-O5 cluster of the oxygen-evolving complex (OEC). There is also a Cl(-1) ion associated with D1 and D2, which is required for oxygen evolution. The PSII complex binds additional chlorophylls, carotenoids and specific lipids. serves as cofactor. Post-translationally, tyr-161 forms a radical intermediate that is referred to as redox-active TyrZ, YZ or Y-Z. In terms of processing, C-terminally processed by CTPA; processing is essential to allow assembly of the oxygen-evolving complex and thus photosynthetic growth.

The protein localises to the plastid. The protein resides in the chloroplast thylakoid membrane. The enzyme catalyses 2 a plastoquinone + 4 hnu + 2 H2O = 2 a plastoquinol + O2. Photosystem II (PSII) is a light-driven water:plastoquinone oxidoreductase that uses light energy to abstract electrons from H(2)O, generating O(2) and a proton gradient subsequently used for ATP formation. It consists of a core antenna complex that captures photons, and an electron transfer chain that converts photonic excitation into a charge separation. The D1/D2 (PsbA/PsbD) reaction center heterodimer binds P680, the primary electron donor of PSII as well as several subsequent electron acceptors. The protein is Photosystem II protein D1 of Hordeum vulgare (Barley).